A 324-amino-acid chain; its full sequence is Transcriptional regulator protein Pur-beta (324 aa).

The disordered stretch occupies residues 1-47; sequence MADGDSGSERGGGGGGGGGPGGFQPAPRGGGGGGGGPGGEQETQELA. Alanine 2 bears the N-acetylalanine mark. Serine 6 and serine 8 each carry phosphoserine. Gly residues predominate over residues 9–39; the sequence is ERGGGGGGGGGPGGFQPAPRGGGGGGGGPGG. An Omega-N-methylarginine modification is found at arginine 28. A DNA-binding region spans residues 37–263; sequence PGGEQETQEL…GVFLRVSEVK (227 aa). At threonine 43 the chain carries Phosphothreonine. The residue at position 113 (serine 113) is a Phosphoserine. Arginine 164 carries the post-translational modification Omega-N-methylarginine. The residue at position 279 (lysine 279) is an N6-acetyllysine. A compositionally biased stretch (basic and acidic residues) spans 297–307; sequence RQRDKLYERRG. Residues 297 to 324 form a disordered region; the sequence is RQRDKLYERRGGGSGGGDESEGEEVDED. The residue at position 306 (arginine 306) is an Omega-N-methylarginine. A phosphoserine mark is found at serine 310 and serine 316. Acidic residues predominate over residues 314-324; that stretch reads DESEGEEVDED.

It belongs to the PUR DNA-binding protein family. Homodimer, heterodimer with PURA and heterotrimer with PURA and YBX1/Y-box protein 1. Interacts with MYOCD and SRF.

It is found in the nucleus. Transcriptional regulator which can act as an activator or a repressor. Represses the transcription of ACTA2 in fibroblasts and smooth muscle cells via its ability to interact with the purine-rich strand of a MCAT-containing element in the 5' flanking region of the gene. Represses the transcription of MYOCD, capable of repressing all isoforms of MYOCD but the magnitude of the repressive effects is most notable for the SMC-specific isoforms. Promotes hepatic glucose production by activating the transcription of ADCY6, leading to cAMP accumulation, increased PKA activity, CREB activation, and increased transcription of PCK1 and G6PC genes. Has capacity to bind repeated elements in single-stranded DNA such as the purine-rich single strand of the PUR element located upstream of the MYC gene. Participates in transcriptional and translational regulation of alpha-MHC expression in cardiac myocytes by binding to the purine-rich negative regulatory (PNR) element. Modulates constitutive liver galectin-3 gene transcription by binding to its promoter. May play a role in the dendritic transport of a subset of mRNAs. This Mus musculus (Mouse) protein is Transcriptional regulator protein Pur-beta (Purb).